We begin with the raw amino-acid sequence, 144 residues long: Large ribosomal subunit protein uL16 (144 aa).

Residues 1–17 (MLQPKKTKFRRQQKGRA) show a composition bias toward basic residues. A disordered region spans residues 1-22 (MLQPKKTKFRRQQKGRAKGNAQ).

Belongs to the universal ribosomal protein uL16 family. As to quaternary structure, part of the 50S ribosomal subunit.

In terms of biological role, binds 23S rRNA and is also seen to make contacts with the A and possibly P site tRNAs. This Bacteroides fragilis (strain ATCC 25285 / DSM 2151 / CCUG 4856 / JCM 11019 / LMG 10263 / NCTC 9343 / Onslow / VPI 2553 / EN-2) protein is Large ribosomal subunit protein uL16.